We begin with the raw amino-acid sequence, 83 residues long: Apolipoprotein C-I, acidic form (83 aa).

The first 26 residues, 1-26 (MRLFLSLPVLVVVLSMVLEGPAPAQG), serve as a signal peptide directing secretion.

Belongs to the apolipoprotein C1 family.

It localises to the secreted. This Pan troglodytes (Chimpanzee) protein is Apolipoprotein C-I, acidic form (APOC1A).